The following is a 95-amino-acid chain: Putative regulatory protein Daud_1598 (95 aa).

The protein belongs to the RemA family.

The protein is Putative regulatory protein Daud_1598 of Desulforudis audaxviator (strain MP104C).